A 137-amino-acid polypeptide reads, in one-letter code: Holo-[acyl-carrier-protein] synthase (137 aa).

Residues Asp-8 and Glu-57 each contribute to the Mg(2+) site.

Belongs to the P-Pant transferase superfamily. AcpS family. Mg(2+) serves as cofactor.

It is found in the cytoplasm. It carries out the reaction apo-[ACP] + CoA = holo-[ACP] + adenosine 3',5'-bisphosphate + H(+). Functionally, transfers the 4'-phosphopantetheine moiety from coenzyme A to a Ser of acyl-carrier-protein. This is Holo-[acyl-carrier-protein] synthase from Hyphomonas neptunium (strain ATCC 15444).